Here is a 189-residue protein sequence, read N- to C-terminus: Threonylcarbamoyl-AMP synthase (189 aa).

In terms of domain architecture, YrdC-like spans 3 to 189; that stretch reads TTSVTEAAEC…NALTGEVIRP (187 aa).

It belongs to the SUA5 family. TsaC subfamily.

The protein resides in the cytoplasm. The catalysed reaction is L-threonine + hydrogencarbonate + ATP = L-threonylcarbamoyladenylate + diphosphate + H2O. In terms of biological role, required for the formation of a threonylcarbamoyl group on adenosine at position 37 (t(6)A37) in tRNAs that read codons beginning with adenine. Catalyzes the conversion of L-threonine, HCO(3)(-)/CO(2) and ATP to give threonylcarbamoyl-AMP (TC-AMP) as the acyladenylate intermediate, with the release of diphosphate. This is Threonylcarbamoyl-AMP synthase from Acinetobacter baumannii (strain ACICU).